The primary structure comprises 425 residues: Enolase (425 aa).

Q163 is a (2R)-2-phosphoglycerate binding site. The active-site Proton donor is the E205. Mg(2+)-binding residues include D242, E285, and D312. 4 residues coordinate (2R)-2-phosphoglycerate: K337, R366, S367, and K388. K337 (proton acceptor) is an active-site residue.

Belongs to the enolase family. Mg(2+) serves as cofactor.

It localises to the cytoplasm. It is found in the secreted. The protein resides in the cell surface. It catalyses the reaction (2R)-2-phosphoglycerate = phosphoenolpyruvate + H2O. The protein operates within carbohydrate degradation; glycolysis; pyruvate from D-glyceraldehyde 3-phosphate: step 4/5. Functionally, catalyzes the reversible conversion of 2-phosphoglycerate (2-PG) into phosphoenolpyruvate (PEP). It is essential for the degradation of carbohydrates via glycolysis. This is Enolase from Cereibacter sphaeroides (strain ATCC 17029 / ATH 2.4.9) (Rhodobacter sphaeroides).